We begin with the raw amino-acid sequence, 308 residues long: ADP,ATP carrier protein (308 aa).

Solcar repeat units follow at residues 6-99, 110-203, and 211-297; these read KNFM…FKRM, KWFA…LKPV, and NNFL…LQVI. The next 5 membrane-spanning stretches (helical) occupy residues 8–35, 76–100, 108–128, 179–200, and 214–234; these read FMVDFLAGGLSAAVSKTAAAPIERVKLL, TANVIRYFPTQALNFAFKDKFKRMF, YWKWFAGNMASGGAAGAVSLS, FNISCVGIVVYRGLYFGMYDSL, and LAAFLLGWGITIGAGLASYPI. ADP-binding residues include arginine 81 and lysine 93. Residue arginine 238 participates in ADP binding. The segment at 238 to 243 is important for transport activity; that stretch reads RRRMMM. Residues 238 to 243 carry the Nucleotide carrier signature motif motif; the sequence is RRRMMM. Residues 274-294 traverse the membrane as a helical segment; sequence AGANILRAVAGAGVLAGYDQL.

Belongs to the mitochondrial carrier (TC 2.A.29) family. As to quaternary structure, monomer.

It localises to the mitochondrion inner membrane. It catalyses the reaction ADP(in) + ATP(out) = ADP(out) + ATP(in). Its activity is regulated as follows. The matrix-open state (m-state) is inhibited by the membrane-permeable bongkrekic acid (BKA). The cytoplasmic-open state (c-state) is inhibited by the membrane-impermeable toxic inhibitor carboxyatractyloside (CATR). ADP:ATP antiporter that mediates import of ADP into the mitochondrial matrix for ATP synthesis, and export of ATP out to fuel the cell. Cycles between the cytoplasmic-open state (c-state) and the matrix-open state (m-state): operates by the alternating access mechanism with a single substrate-binding site intermittently exposed to either the cytosolic (c-state) or matrix (m-state) side of the inner mitochondrial membrane. The polypeptide is ADP,ATP carrier protein (ABT) (Chlamydomonas reinhardtii (Chlamydomonas smithii)).